Reading from the N-terminus, the 45-residue chain is AAGELTLTQLESLREVCEANLACEDMMDAQGIIAAYTAYYGPIPY.

In terms of domain architecture, Gla spans 1–41 (AAGELTLTQLESLREVCEANLACEDMMDAQGIIAAYTAYYG). Residues Glu11, Glu15, Glu18, and Glu24 each coordinate Ca(2+). Residues Glu11, Glu15, and Glu18 each carry the 4-carboxyglutamate modification. Cys17 and Cys23 form a disulfide bridge.

Belongs to the osteocalcin/matrix Gla protein family. Gamma-carboxyglutamate residues are formed by vitamin K dependent carboxylation by GGCX. These residues are essential for the binding of calcium. Also found in smaller quantities in dentin.

The protein localises to the secreted. In terms of biological role, the carboxylated form is one of the main organic components of the bone matrix, which constitutes 1-2% of the total bone protein. The carboxylated form binds strongly to apatite and calcium. The polypeptide is Osteocalcin (bglap) (Lepomis macrochirus (Bluegill)).